Reading from the N-terminus, the 435-residue chain is 3-ketoacyl-CoA thiolase (435 aa).

Residue Cys-98 is the Acyl-thioester intermediate of the active site. Residues His-391 and Cys-421 each act as proton acceptor in the active site.

Belongs to the thiolase-like superfamily. Thiolase family. Heterotetramer of two alpha chains (FadJ) and two beta chains (FadI).

Its subcellular location is the cytoplasm. The catalysed reaction is an acyl-CoA + acetyl-CoA = a 3-oxoacyl-CoA + CoA. It functions in the pathway lipid metabolism; fatty acid beta-oxidation. Catalyzes the final step of fatty acid oxidation in which acetyl-CoA is released and the CoA ester of a fatty acid two carbons shorter is formed. This is 3-ketoacyl-CoA thiolase from Vibrio parahaemolyticus serotype O3:K6 (strain RIMD 2210633).